Consider the following 65-residue polypeptide: Small ribosomal subunit protein bS21B (65 aa).

It belongs to the bacterial ribosomal protein bS21 family.

The sequence is that of Small ribosomal subunit protein bS21B from Geobacter sulfurreducens (strain ATCC 51573 / DSM 12127 / PCA).